Here is a 914-residue protein sequence, read N- to C-terminus: Scaffold attachment factor B1 (914 aa).

A compositionally biased stretch (low complexity) spans 1–24 (MAETLSGLGDSGAAGAAALSSASS). The segment at 1 to 33 (MAETLSGLGDSGAAGAAALSSASSETGTRRLSD) is disordered. Alanine 2 carries the N-acetylalanine modification. Phosphoserine occurs at positions 24 and 55. An SAP domain is found at 31 to 65 (LSDLRVIDLRAELRKRNVDSSGNKSVLMERLKKAI). The disordered stretch occupies residues 64 to 117 (AIEDEGGNPDEIEITSEGNKKTSKRSSKGRKPEEEGVEDNGLEENSGDGQEDVE). A compositionally biased stretch (acidic residues) spans 67 to 77 (DEGGNPDEIEI). Phosphoserine is present on serine 79. The segment covering 98 to 117 (EGVEDNGLEENSGDGQEDVE) has biased composition (acidic residues). Glycyl lysine isopeptide (Lys-Gly) (interchain with G-Cter in SUMO2) cross-links involve residues lysine 172 and lysine 186. Residue threonine 188 is modified to Phosphothreonine. A phosphoserine mark is found at serine 195, serine 197, and serine 209. The disordered stretch occupies residues 221 to 407 (LGETCKSEPV…EKGRSSCGRN (187 aa)). Over residues 225–234 (CKSEPVKEES) the composition is skewed to basic and acidic residues. Lysine 231 participates in a covalent cross-link: Glycyl lysine isopeptide (Lys-Gly) (interchain with G-Cter in SUMO). Residues 275–286 (SESTAHAQSSKA) are compositionally biased toward polar residues. Residues 293–309 (VKREPAEQPGDGERTDC) are compositionally biased toward basic and acidic residues. Lysine 294 is covalently cross-linked (Glycyl lysine isopeptide (Lys-Gly) (interchain with G-Cter in SUMO)). The span at 319 to 330 (EQSSAASELAEA) shows a compositional bias: low complexity. The span at 346-359 (EARDSKEDGRKFDF) shows a compositional bias: basic and acidic residues. Residues 371 to 383 (ESSTSEGADQKMS) are compositionally biased toward polar residues. Lysine 381 participates in a covalent cross-link: Glycyl lysine isopeptide (Lys-Gly) (interchain with G-Cter in SUMO2). Phosphoserine occurs at positions 383 and 384. Over residues 390-401 (DTKRLSKEEKGR) the composition is skewed to basic and acidic residues. Residue lysine 392 forms a Glycyl lysine isopeptide (Lys-Gly) (interchain with G-Cter in SUMO2) linkage. The 79-residue stretch at 406 to 484 (RNFWVSGLSS…KMISVEKAKN (79 aa)) folds into the RRM domain. Serine 415 is modified (phosphoserine). Composition is skewed to basic and acidic residues over residues 477–551 (ISVE…ERSR) and 559–570 (GTERTVVMDKSK). Disordered stretches follow at residues 477–636 (ISVE…QAQW), 670–706 (RERM…QERR), and 748–914 (FDHR…TRRY). Glycyl lysine isopeptide (Lys-Gly) (interchain with G-Cter in SUMO2) cross-links involve residues lysine 483, lysine 514, lysine 543, and lysine 570. Positions 528–791 (GDDGSGEKSK…RHGGPERHGR (264 aa)) are interaction with POLR2A; SFRS1; SFRS9 and SFRS10. Lysine 578 participates in a covalent cross-link: Glycyl lysine isopeptide (Lys-Gly) (interchain with G-Cter in SUMO1); alternate. Residue lysine 578 forms a Glycyl lysine isopeptide (Lys-Gly) (interchain with G-Cter in SUMO2); alternate linkage. Phosphoserine occurs at positions 580, 582, 601, and 604. Over residues 581–636 (GSKERASKSLDRKSASREKRSVVSFDKVKEPRKSRDSESHRVRERSEREQRMQAQW) the composition is skewed to basic and acidic residues. Residues 599–616 (KRSVVSFDKVKEPRKSRD) carry the Nuclear localization signal motif. Residues 599 to 914 (KRSVVSFDKV…PSDARFTRRY (316 aa)) form an interaction with SAFB2 region. N6-acetyllysine is present on lysine 607. Positions 748 to 795 (FDHRDRGRYPDHSVDRREGSRSMMGEREGQHYPERHGGPERHGRDSRD) are enriched in basic and acidic residues. Omega-N-methylarginine is present on arginine 810. Composition is skewed to basic and acidic residues over residues 816 to 831 (PRRD…DDRA) and 840 to 850 (MMDRDHKRWQG). Residue lysine 846 forms a Glycyl lysine isopeptide (Lys-Gly) (interchain with G-Cter in SUMO2) linkage. 3 positions are modified to asymmetric dimethylarginine: arginine 867, arginine 873, and arginine 883. Gly residues predominate over residues 891-900 (GMQGGFGGQS). Residues 904–914 (RPSDARFTRRY) show a composition bias toward basic and acidic residues.

As to quaternary structure, monomer and homodimer. Interacts with KHDRBS3. Interacts with CLK2. Interacts with POLR2A, ASF/SRSF1, SRp30c/SRFS9 and TRA2B/SFRS10. Interacts with SRPK1 and inhibits its activity. Interacts with RBMX. Interacts with FUS. Interacts with ZBED4. Post-translationally, sumoylated by PIAS1 with SUMO1 and SUMO2/3, desumoylated by SENP1. Sumoylation is required for transcriptional repressor activity.

The protein resides in the nucleus. Binds to scaffold/matrix attachment region (S/MAR) DNA and forms a molecular assembly point to allow the formation of a 'transcriptosomal' complex (consisting of SR proteins and RNA polymerase II) coupling transcription and RNA processing. Functions as an estrogen receptor corepressor and can also bind to the HSP27 promoter and decrease its transcription. Thereby acts as a negative regulator of cell proliferation. When associated with RBMX, binds to and stimulates transcription from the SREBF1 promoter. The chain is Scaffold attachment factor B1 (SAFB) from Pongo abelii (Sumatran orangutan).